The following is a 262-amino-acid chain: 4-hydroxy-2-oxovalerate aldolase (262 aa).

Residue histidine 48 is the Proton acceptor of the active site. A substrate-binding site is contributed by glutamine 149. Glutamate 151 contacts Mg(2+). Substrate is bound by residues alanine 176 and aspartate 177. Residue aspartate 177 participates in Mg(2+) binding.

This sequence belongs to the HpcH/HpaI aldolase family.

It carries out the reaction (S)-4-hydroxy-2-oxopentanoate = acetaldehyde + pyruvate. Its pathway is xenobiotic degradation; biphenyl degradation. Functionally, catalyzes the reversible retro-aldol cleavage of 4-hydroxy-2-oxovalerate to pyruvate and acetaldehyde. The chain is 4-hydroxy-2-oxovalerate aldolase (bphF) from Novosphingobium aromaticivorans (Sphingomonas aromaticivorans).